We begin with the raw amino-acid sequence, 482 residues long: Carbamoyl phosphate synthase large chain, N-terminal section (482 aa).

Residues Met1 to Asp398 are carboxyphosphate synthetic domain. ATP-binding residues include Arg126, Arg166, Gly172, Gly173, Glu205, Val207, Glu212, Gly238, Ile239, His240, Gln281, and Glu295. An ATP-grasp domain is found at Ala130–Ile324. 3 residues coordinate Mg(2+): Gln281, Glu295, and Asn297. Residues Gln281, Glu295, and Asn297 each coordinate Mn(2+).

The protein belongs to the CarB family. Composed of two chains; the small (or glutamine) chain promotes the hydrolysis of glutamine to ammonia, which is used by the large (or ammonia) chain to synthesize carbamoyl phosphate. Tetramer of heterodimers (alpha,beta)4. Requires Mg(2+) as cofactor. Mn(2+) serves as cofactor.

It carries out the reaction hydrogencarbonate + L-glutamine + 2 ATP + H2O = carbamoyl phosphate + L-glutamate + 2 ADP + phosphate + 2 H(+). The enzyme catalyses hydrogencarbonate + NH4(+) + 2 ATP = carbamoyl phosphate + 2 ADP + phosphate + 2 H(+). The protein operates within amino-acid biosynthesis; L-arginine biosynthesis; carbamoyl phosphate from bicarbonate: step 1/1. Its pathway is pyrimidine metabolism; UMP biosynthesis via de novo pathway; (S)-dihydroorotate from bicarbonate: step 1/3. In terms of biological role, large subunit of the glutamine-dependent carbamoyl phosphate synthetase (CPSase). CPSase catalyzes the formation of carbamoyl phosphate from the ammonia moiety of glutamine, carbonate, and phosphate donated by ATP, constituting the first step of 2 biosynthetic pathways, one leading to arginine and/or urea and the other to pyrimidine nucleotides. The large subunit (synthetase) binds the substrates ammonia (free or transferred from glutamine from the small subunit), hydrogencarbonate and ATP and carries out an ATP-coupled ligase reaction, activating hydrogencarbonate by forming carboxy phosphate which reacts with ammonia to form carbamoyl phosphate. The polypeptide is Carbamoyl phosphate synthase large chain, N-terminal section (carB1) (Methanocaldococcus jannaschii (strain ATCC 43067 / DSM 2661 / JAL-1 / JCM 10045 / NBRC 100440) (Methanococcus jannaschii)).